Reading from the N-terminus, the 506-residue chain is MTYPGPPRPAHVSATPLAELAGQMGAATPERDAEVTGITHDSRAVRPGDLYAALPGARLHGADFVTQAAGLGAVAVLTDPTGADRAAATGLPVLVVDDPRGRMGELAATIYGHPGRDLLQIGITGTSGKTTTAYLIEGGLRTVRSTGLIGTVEMRIGDERIKSERTTPEATDLQALFAVMRERGVDAVAMEVSSHALVLGRVDGCVFDIAVFNNLSPEHMEFHSDMEDYFRAKAQLFTPQRSKLGVVNFDDEYGRRLVEEAGVPIVTFSAEGHPDADWRAQDVEVGPMDSTFTVIGPKEERITARSPLAGPFNVANTLAAIVALAAAGLDPQAAADGIAAVPGVPGRLERVDVGQPYLAVVDYAHKTDAVESVLRALRKVTEGKLHIVLGCGGDRDRTKRMPMGAAAARLADTAVLTSDNPRSEDPLAILATMLAGAAEVPSHERGEVQVFENRAAAIAAVVARARPGDTVLVAGKGHEQGQDIAGVVRPFDDRLVLREAIQQTQG.

Ser-42 is a UDP-N-acetyl-alpha-D-muramoyl-L-alanyl-D-glutamate binding site. 125–131 (GTSGKTT) contacts ATP. UDP-N-acetyl-alpha-D-muramoyl-L-alanyl-D-glutamate is bound by residues 166–167 (TT), Ser-193, and Arg-201. Lys-233 carries the N6-carboxylysine modification. Meso-2,6-diaminopimelate is bound by residues Arg-395, 419–422 (DNPR), Gly-475, and Glu-479. The Meso-diaminopimelate recognition motif motif lies at 419–422 (DNPR).

This sequence belongs to the MurCDEF family. MurE subfamily. It depends on Mg(2+) as a cofactor. In terms of processing, carboxylation is probably crucial for Mg(2+) binding and, consequently, for the gamma-phosphate positioning of ATP.

It is found in the cytoplasm. It catalyses the reaction UDP-N-acetyl-alpha-D-muramoyl-L-alanyl-D-glutamate + meso-2,6-diaminopimelate + ATP = UDP-N-acetyl-alpha-D-muramoyl-L-alanyl-gamma-D-glutamyl-meso-2,6-diaminopimelate + ADP + phosphate + H(+). The protein operates within cell wall biogenesis; peptidoglycan biosynthesis. In terms of biological role, catalyzes the addition of meso-diaminopimelic acid to the nucleotide precursor UDP-N-acetylmuramoyl-L-alanyl-D-glutamate (UMAG) in the biosynthesis of bacterial cell-wall peptidoglycan. The protein is UDP-N-acetylmuramoyl-L-alanyl-D-glutamate--2,6-diaminopimelate ligase of Streptomyces avermitilis (strain ATCC 31267 / DSM 46492 / JCM 5070 / NBRC 14893 / NCIMB 12804 / NRRL 8165 / MA-4680).